Reading from the N-terminus, the 395-residue chain is Protein-arginine rhamnosyltransferase (395 aa).

Residues 19–22 (NYGD), Tyr-205, Gln-272, and 288–292 (RGEDS) contribute to the dTDP-beta-L-rhamnose site. The Proton acceptor role is filled by Asp-22. The active site involves Glu-290.

Belongs to the glycosyltransferase 104 family.

It catalyses the reaction dTDP-beta-L-rhamnose + L-arginyl-[protein] = N(omega)-(alpha-L-rhamnosyl)-L-arginyl-[protein] + dTDP + H(+). Its function is as follows. Protein-arginine rhamnosyltransferase that catalyzes the transfer of a single rhamnose to elongation factor P (EF-P) on 'Lys-32', a modification required for EF-P-dependent rescue of polyproline stalled ribosomes. The sequence is that of Protein-arginine rhamnosyltransferase from Shewanella oneidensis (strain ATCC 700550 / JCM 31522 / CIP 106686 / LMG 19005 / NCIMB 14063 / MR-1).